The sequence spans 176 residues: 3-hydroxydecanoyl-[acyl-carrier-protein] dehydratase (176 aa).

The active site involves His71.

The protein belongs to the thioester dehydratase family. FabA subfamily. Homodimer.

Its subcellular location is the cytoplasm. It catalyses the reaction a (3R)-hydroxyacyl-[ACP] = a (2E)-enoyl-[ACP] + H2O. The catalysed reaction is (3R)-hydroxydecanoyl-[ACP] = (2E)-decenoyl-[ACP] + H2O. It carries out the reaction (2E)-decenoyl-[ACP] = (3Z)-decenoyl-[ACP]. It participates in lipid metabolism; fatty acid biosynthesis. In terms of biological role, necessary for the introduction of cis unsaturation into fatty acids. Catalyzes the dehydration of (3R)-3-hydroxydecanoyl-ACP to E-(2)-decenoyl-ACP and then its isomerization to Z-(3)-decenoyl-ACP. Can catalyze the dehydratase reaction for beta-hydroxyacyl-ACPs with saturated chain lengths up to 16:0, being most active on intermediate chain length. This Rhodopseudomonas palustris (strain HaA2) protein is 3-hydroxydecanoyl-[acyl-carrier-protein] dehydratase.